The sequence spans 1444 residues: Adhesin P1 (1444 aa).

The N-terminal stretch at 1–30 (MHQPKKRLAKKSWAFLTAALTLGVITGVGG) is a signal peptide. Disordered regions lie at residues 231–283 (QSSF…EVER), 845–885 (IPFE…ALPN), and 927–949 (GDSNDQFNKDSEQKWDKTETNEG). Basic and acidic residues predominate over residues 240–257 (LQKDSPVKDSSKQGEKLS). Residues 258–272 (ETTASSMSSGMATST) are compositionally biased toward low complexity. 2 stretches are compositionally biased toward polar residues: residues 851–860 (KPSNNSTPFD) and 868–878 (VTPSGGSSKPT). Basic and acidic residues predominate over residues 933 to 946 (FNKDSEQKWDKTET). A helical transmembrane segment spans residues 1353–1373 (VLPLIVTVPIVVIILSVTLGL). The segment at 1419–1444 (NAPKKLKQATPTKPTPKTPPKPPVKQ) is disordered. Positions 1431–1444 (KPTPKTPPKPPVKQ) are enriched in pro residues.

The protein belongs to the adhesin P1 family.

It is found in the cell membrane. Functionally, the protein is the major adhesin mediating the attachment of this mycoplasma to the ciliated epithelium. The sequence is that of Adhesin P1 (mgpA) from Mycoplasma genitalium (strain ATCC 33530 / DSM 19775 / NCTC 10195 / G37) (Mycoplasmoides genitalium).